Consider the following 209-residue polypeptide: Somatotropin (209 aa).

Residues 1–22 form the signal peptide; it reads MGQVFLLMPVLLVAGYLSLGAA. H38 contacts Zn(2+). Residues C71 and C182 are joined by a disulfide bond. E191 is a binding site for Zn(2+). C199 and C207 are oxidised to a cystine.

The protein belongs to the somatotropin/prolactin family.

The protein resides in the secreted. In terms of biological role, growth hormone plays an important role in growth control and is involved in the regulation of several anabolic processes. Implicated as an osmoregulatory substance important for seawater adaptation. The polypeptide is Somatotropin (gh) (Esox lucius (Northern pike)).